We begin with the raw amino-acid sequence, 600 residues long: Putative DNA 3'-5' helicase Rad25 (600 aa).

One can recognise a Helicase ATP-binding domain in the interval 253 to 402 (VDRFEDASAG…DIYTLVGRPI (150 aa)). 266–273 (GPPGSGKT) contributes to the ATP binding site. The short motif at 356–359 (DEVH) is the DEAH box element. One can recognise a Helicase C-terminal domain in the interval 457 to 600 (EIEHLVDQHG…VTESDASHSP (144 aa)). Residues 569–600 (RGTEEEDHARSRMRHLSTKGVRVTESDASHSP) are disordered. Basic and acidic residues predominate over residues 590-600 (RVTESDASHSP).

This sequence belongs to the helicase family. RAD25/XPB subfamily.

The enzyme catalyses Couples ATP hydrolysis with the unwinding of duplex DNA by translocating in the 3'-5' direction.. It carries out the reaction ATP + H2O = ADP + phosphate + H(+). This is Putative DNA 3'-5' helicase Rad25 from Halobacterium salinarum (strain ATCC 700922 / JCM 11081 / NRC-1) (Halobacterium halobium).